We begin with the raw amino-acid sequence, 66 residues long: Large ribosomal subunit protein bL35 (66 aa).

Composition is skewed to basic residues over residues 1-15 (MPKLKTKSGAKKRFK) and 27-40 (AGKRHGMIKRTKKQ). The interval 1–40 (MPKLKTKSGAKKRFKVTGTGKVMSAHAGKRHGMIKRTKKQ) is disordered.

The protein belongs to the bacterial ribosomal protein bL35 family.

The chain is Large ribosomal subunit protein bL35 from Rhodopseudomonas palustris (strain BisA53).